We begin with the raw amino-acid sequence, 483 residues long: Protein adenylyltransferase Fic (483 aa).

A helical transmembrane segment spans residues 20–42 (AFFFIAGSLATFVFHALTSSSSV). TPR repeat units follow at residues 107-140 (ALGA…APKH) and 141-175 (PEVL…SPSN). Positions 232–237 (SVGIEG) match the Inhibitory (S/T)XXXE(G/N) motif motif. Residues Glu236 and 317–320 (VGGH) each bind ATP. The 136-residue stretch at 286-421 (ITLKDILELH…IRPFVRFIAD (136 aa)) folds into the Fido domain. His364 is an active-site residue. Residues 368–375 (DGNGRTSR), 400–401 (YY), and Asn408 each bind ATP. Positions 464–483 (SAPEPYESGSGLDSGVNGMP) are disordered.

Belongs to the fic family. As to quaternary structure, homodimer.

It localises to the membrane. The catalysed reaction is L-tyrosyl-[protein] + ATP = O-(5'-adenylyl)-L-tyrosyl-[protein] + diphosphate. It catalyses the reaction L-threonyl-[protein] + ATP = 3-O-(5'-adenylyl)-L-threonyl-[protein] + diphosphate. The enzyme catalyses 3-O-(5'-adenylyl)-L-threonyl-[protein] + H2O = L-threonyl-[protein] + AMP + H(+). With respect to regulation, the side chain of Glu-236 determines which of the two opposing activities (AMPylase or de-AMPylase) will take place. In response to endoplasmic reticulum stress, mediates de-AMPylase activity. Adenylyltransferase activity is inhibited by the inhibitory helix present at the N-terminus: Glu-236 binds ATP and competes with ATP-binding at Arg-375, thereby preventing adenylyltransferase activity. In unstressed cells, disengagement of Glu-236 promotes adenylyltransferase activity. Activation dissociates ATP-binding from Glu-236, allowing ordered binding of the entire ATP moiety with the alpha-phosphate in an orientation that is productive for accepting an incoming target hydroxyl side chain. Its function is as follows. Protein that can both mediate the addition of adenosine 5'-monophosphate (AMP) to specific residues of target proteins (AMPylation), and the removal of the same modification from target proteins (de-AMPylation), depending on the context. The side chain of Glu-236 determines which of the two opposing activities (AMPylase or de-AMPylase) will take place. Acts as a key regulator of the unfolded protein response (UPR) by mediating AMPylation or de-AMPylation of Hsc70-3/BiP. In unstressed cells, acts as an adenylyltransferase by mediating AMPylation of Hsc70-3/BiP at 'Thr-518', thereby inactivating it. In response to endoplasmic reticulum stress, acts as a phosphodiesterase by mediating removal of ATP (de-AMPylation) from Hsc70-3/BiP at 'Thr-518', leading to restore HSPA5/BiP activity. The polypeptide is Protein adenylyltransferase Fic (Drosophila grimshawi (Hawaiian fruit fly)).